Here is a 693-residue protein sequence, read N- to C-terminus: Translation factor GUF1 homolog, chloroplastic (693 aa).

A chloroplast-targeting transit peptide spans 1-51; sequence MATDLSSSSTLLLSRNCKTPPFYHTTNSLSLSKTHHLYASRNAVVSRLRLL. Positions 86-267 constitute a tr-type G domain; the sequence is SNIRNFCIIA…AIVERIPSPR (182 aa). GTP-binding positions include 95–102, 160–164, and 214–217; these read AHIDHGKS, DTPGH, and NKID.

It belongs to the TRAFAC class translation factor GTPase superfamily. Classic translation factor GTPase family. LepA subfamily.

It is found in the plastid. The protein localises to the chloroplast. It catalyses the reaction GTP + H2O = GDP + phosphate + H(+). Promotes chloroplast protein synthesis. May act as a fidelity factor of the translation reaction, by catalyzing a one-codon backward translocation of tRNAs on improperly translocated ribosomes. The protein is Translation factor GUF1 homolog, chloroplastic of Ricinus communis (Castor bean).